The chain runs to 454 residues: tRNA modification GTPase MnmE (454 aa).

Positions 23, 80, and 120 each coordinate (6S)-5-formyl-5,6,7,8-tetrahydrofolate. A TrmE-type G domain is found at 216 to 377 (GMKVVIAGRP…LRDHLKQSMG (162 aa)). Asn226 contacts K(+). GTP contacts are provided by residues 226–231 (NAGKSS), 245–251 (TAIAGTT), 270–273 (DTAG), 335–338 (NKAD), and 358–360 (SAR). Residue Ser230 coordinates Mg(2+). K(+) is bound by residues Thr245, Ile247, and Thr250. Thr251 is a binding site for Mg(2+). A (6S)-5-formyl-5,6,7,8-tetrahydrofolate-binding site is contributed by Lys454.

The protein belongs to the TRAFAC class TrmE-Era-EngA-EngB-Septin-like GTPase superfamily. TrmE GTPase family. As to quaternary structure, homodimer. Heterotetramer of two MnmE and two MnmG subunits. Requires K(+) as cofactor.

It localises to the cytoplasm. Its function is as follows. Exhibits a very high intrinsic GTPase hydrolysis rate. Involved in the addition of a carboxymethylaminomethyl (cmnm) group at the wobble position (U34) of certain tRNAs, forming tRNA-cmnm(5)s(2)U34. The chain is tRNA modification GTPase MnmE from Pectobacterium atrosepticum (strain SCRI 1043 / ATCC BAA-672) (Erwinia carotovora subsp. atroseptica).